The primary structure comprises 89 residues: MANHKSAKKMMKVIAKRTLVNKMRKSKTRTAIRRLVDIIKSGDKENVVLAFRNAESNLHKCVNKGVIHRNTAARKISRLNAKVKALMTA.

Belongs to the bacterial ribosomal protein bS20 family.

Its function is as follows. Binds directly to 16S ribosomal RNA. In Wolbachia pipientis subsp. Culex pipiens (strain wPip), this protein is Small ribosomal subunit protein bS20.